Here is a 581-residue protein sequence, read N- to C-terminus: 2-succinyl-5-enolpyruvyl-6-hydroxy-3-cyclohexene-1-carboxylate synthase (581 aa).

Belongs to the TPP enzyme family. MenD subfamily. As to quaternary structure, homodimer. Requires Mg(2+) as cofactor. It depends on Mn(2+) as a cofactor. Thiamine diphosphate serves as cofactor.

The enzyme catalyses isochorismate + 2-oxoglutarate + H(+) = 5-enolpyruvoyl-6-hydroxy-2-succinyl-cyclohex-3-ene-1-carboxylate + CO2. It functions in the pathway quinol/quinone metabolism; 1,4-dihydroxy-2-naphthoate biosynthesis; 1,4-dihydroxy-2-naphthoate from chorismate: step 2/7. Its pathway is quinol/quinone metabolism; menaquinone biosynthesis. Functionally, catalyzes the thiamine diphosphate-dependent decarboxylation of 2-oxoglutarate and the subsequent addition of the resulting succinic semialdehyde-thiamine pyrophosphate anion to isochorismate to yield 2-succinyl-5-enolpyruvyl-6-hydroxy-3-cyclohexene-1-carboxylate (SEPHCHC). This chain is 2-succinyl-5-enolpyruvyl-6-hydroxy-3-cyclohexene-1-carboxylate synthase, found in Chlorobium phaeobacteroides (strain BS1).